Consider the following 273-residue polypeptide: Short-chain dehydrogenase fogB (273 aa).

Positions 16, 66, 128, 174, 178, 207, and 209 each coordinate NADP(+). Tyrosine 174 acts as the Proton donor in catalysis. Lysine 178 functions as the Lowers pKa of active site Tyr in the catalytic mechanism.

The protein belongs to the short-chain dehydrogenases/reductases (SDR) family.

Its function is as follows. Short-chain dehydrogenase; part of the gene cluster that mediates the biosynthesis of flavoglaucin and congeners (including aspergin, dihydroauroglaucin and auroglaucin), prenylated salicylaldehyde derivatives carrying a saturated or an unsaturated C-7 side chain. The PKS fogA releases the carboxylic acid (8E,10E,12E)-3,5,7-trihydroxytetradeca-8,10,12-trienoic acid as its product, as well as derivatives with one and two double bonds. FogA is indeed able to reduce the initial triketide, thus being at least partially responsible for the differently saturated heptyl side chains of flavoglaucin congeners. The oxidoreductases fogB, fogC and fogD modify the nascent polyketide in fogA-bound form and, together, fogA, fogB, fogC and fogD are necessary for the formation of the aromatic core and the cyclized PKS products are released as salicyl alcohols. In particular, fogB is responsible for oxidation of a hydroxyl group or reduction of remaining double bond(s) at the C-7 residue whereas fogD is probably involved in the reductive release of the modified PKS products. The cytochrome P450 monooxygenase fogE is then responsible for the hydroxylation at C-3 of the benzene ring. The fogE products are substrates of the prenyltransferase fogH and the prenylated benzyl alcohols are subsequently oxidized by the fogF to produce the final aryl aldehydes flavoglaucin and congeners. The short-chain dehydrogenase fogG does not seem to be involved in the biosynthesis of the prenylated salicylaldehyde derivatives. This chain is Short-chain dehydrogenase fogB, found in Aspergillus ruber (strain CBS 135680).